We begin with the raw amino-acid sequence, 383 residues long: ATP phosphoribosyltransferase regulatory subunit (383 aa).

This sequence belongs to the class-II aminoacyl-tRNA synthetase family. HisZ subfamily. As to quaternary structure, heteromultimer composed of HisG and HisZ subunits.

The protein resides in the cytoplasm. It functions in the pathway amino-acid biosynthesis; L-histidine biosynthesis; L-histidine from 5-phospho-alpha-D-ribose 1-diphosphate: step 1/9. Required for the first step of histidine biosynthesis. May allow the feedback regulation of ATP phosphoribosyltransferase activity by histidine. This Desulfitobacterium hafniense (strain DSM 10664 / DCB-2) protein is ATP phosphoribosyltransferase regulatory subunit.